Reading from the N-terminus, the 465-residue chain is Trigger factor (465 aa).

Residues 163 to 248 form the PPIase FKBP-type domain; that stretch reads GDVINFNFKG…INKIKENQPA (86 aa). The tract at residues 431–465 is disordered; that stretch reads EIVNKNQNDNEIEQDKEQKDNNEEKIKQENNLENK. Residues 443-465 show a composition bias toward basic and acidic residues; that stretch reads EQDKEQKDNNEEKIKQENNLENK.

It belongs to the FKBP-type PPIase family. Tig subfamily.

Its subcellular location is the cytoplasm. It catalyses the reaction [protein]-peptidylproline (omega=180) = [protein]-peptidylproline (omega=0). In terms of biological role, involved in protein export. Acts as a chaperone by maintaining the newly synthesized protein in an open conformation. Functions as a peptidyl-prolyl cis-trans isomerase. The polypeptide is Trigger factor (Mesomycoplasma hyopneumoniae (strain J / ATCC 25934 / NCTC 10110) (Mycoplasma hyopneumoniae)).